Here is a 173-residue protein sequence, read N- to C-terminus: Shikimate kinase (173 aa).

Gly12–Thr17 is a binding site for ATP. Residue Thr16 participates in Mg(2+) binding. Residues Asp34, Arg58, and Gly80 each contribute to the substrate site. Arg118 is a binding site for ATP. Arg136 contacts substrate.

It belongs to the shikimate kinase family. In terms of assembly, monomer. Mg(2+) serves as cofactor.

It localises to the cytoplasm. It carries out the reaction shikimate + ATP = 3-phosphoshikimate + ADP + H(+). It participates in metabolic intermediate biosynthesis; chorismate biosynthesis; chorismate from D-erythrose 4-phosphate and phosphoenolpyruvate: step 5/7. In terms of biological role, catalyzes the specific phosphorylation of the 3-hydroxyl group of shikimic acid using ATP as a cosubstrate. The polypeptide is Shikimate kinase (Moorella thermoacetica (strain ATCC 39073 / JCM 9320)).